We begin with the raw amino-acid sequence, 157 residues long: Peptide methionine sulfoxide reductase MsrA (157 aa).

Residue Cys10 is part of the active site.

It belongs to the MsrA Met sulfoxide reductase family.

The enzyme catalyses L-methionyl-[protein] + [thioredoxin]-disulfide + H2O = L-methionyl-(S)-S-oxide-[protein] + [thioredoxin]-dithiol. It catalyses the reaction [thioredoxin]-disulfide + L-methionine + H2O = L-methionine (S)-S-oxide + [thioredoxin]-dithiol. Has an important function as a repair enzyme for proteins that have been inactivated by oxidation. Catalyzes the reversible oxidation-reduction of methionine sulfoxide in proteins to methionine. This chain is Peptide methionine sulfoxide reductase MsrA, found in Clostridium botulinum (strain Hall / ATCC 3502 / NCTC 13319 / Type A).